Reading from the N-terminus, the 269-residue chain is Tryptophan synthase alpha chain (269 aa).

Residues Glu49 and Asp60 each act as proton acceptor in the active site.

The protein belongs to the TrpA family. In terms of assembly, tetramer of two alpha and two beta chains.

The catalysed reaction is (1S,2R)-1-C-(indol-3-yl)glycerol 3-phosphate + L-serine = D-glyceraldehyde 3-phosphate + L-tryptophan + H2O. It functions in the pathway amino-acid biosynthesis; L-tryptophan biosynthesis; L-tryptophan from chorismate: step 5/5. Its function is as follows. The alpha subunit is responsible for the aldol cleavage of indoleglycerol phosphate to indole and glyceraldehyde 3-phosphate. This Actinobacillus pleuropneumoniae serotype 3 (strain JL03) protein is Tryptophan synthase alpha chain.